Consider the following 85-residue polypeptide: Elongation factor 1-beta (85 aa).

Belongs to the EF-1-beta/EF-1-delta family.

Functionally, promotes the exchange of GDP for GTP in EF-1-alpha/GDP, thus allowing the regeneration of EF-1-alpha/GTP that could then be used to form the ternary complex EF-1-alpha/GTP/AAtRNA. This is Elongation factor 1-beta from Methanospirillum hungatei JF-1 (strain ATCC 27890 / DSM 864 / NBRC 100397 / JF-1).